A 302-amino-acid chain; its full sequence is N-acetyl-D-glucosamine kinase (302 aa).

ATP-binding positions include 4–11 (GFDVGGTK) and 133–140 (GFGGGLVY). Zn(2+) contacts are provided by His157, Cys177, Cys179, and Cys184.

This sequence belongs to the ROK (NagC/XylR) family. NagK subfamily.

It catalyses the reaction N-acetyl-D-glucosamine + ATP = N-acetyl-D-glucosamine 6-phosphate + ADP + H(+). It functions in the pathway cell wall biogenesis; peptidoglycan recycling. Catalyzes the phosphorylation of N-acetyl-D-glucosamine (GlcNAc) derived from cell-wall degradation, yielding GlcNAc-6-P. This Vibrio atlanticus (strain LGP32) (Vibrio splendidus (strain Mel32)) protein is N-acetyl-D-glucosamine kinase.